The sequence spans 144 residues: NADH-ubiquinone oxidoreductase chain 6 (144 aa).

Transmembrane regions (helical) follow at residues Met1 to Asp21, Ser25 to His45, Ile46 to Tyr66, Val75 to Val95, and Phe108 to Met128.

This sequence belongs to the complex I subunit 6 family.

Its subcellular location is the mitochondrion membrane. The enzyme catalyses a ubiquinone + NADH + 5 H(+)(in) = a ubiquinol + NAD(+) + 4 H(+)(out). Its function is as follows. Core subunit of the mitochondrial membrane respiratory chain NADH dehydrogenase (Complex I) that is believed to belong to the minimal assembly required for catalysis. Complex I functions in the transfer of electrons from NADH to the respiratory chain. The immediate electron acceptor for the enzyme is believed to be ubiquinone. In Caenorhabditis briggsae, this protein is NADH-ubiquinone oxidoreductase chain 6 (nd6).